A 274-amino-acid chain; its full sequence is MPRAEPRATLGEQEKAGLPLGAWRLYLLRHFRKQTELRRSGSRDVTGALLVAAAVASEAVGSLRVAEGGPNTLLLQVLRSWPWCNKELKTMEERKVKRRSPKSFSAHCTQVVNAKKNAIPVSKSTGFSNPASQSTSQRPKLKRVMKEKTKPQGGEGKGAQSTPIQHSFLTDVSDVQEMERGLLSLLNDFHSGKLQAFGNECSIEQMEHVRGMQEKLARLNLELYGELEELPEDKRKTASDSNLDRLLSDLEELNSSIQKLHLADAQDVPNTSAS.

The segment at 121–166 (VSKSTGFSNPASQSTSQRPKLKRVMKEKTKPQGGEGKGAQSTPIQH) is disordered. Positions 122 to 138 (SKSTGFSNPASQSTSQR) are enriched in polar residues. Residues 234-263 (KRKTASDSNLDRLLSDLEELNSSIQKLHLA) adopt a coiled-coil conformation.

In Homo sapiens (Human), this protein is Coiled-coil domain-containing protein 28A (CCDC28A).